Here is a 169-residue protein sequence, read N- to C-terminus: Crossover junction endodeoxyribonuclease RuvC (169 aa).

Active-site residues include aspartate 15, glutamate 75, and aspartate 147. Residues aspartate 15, glutamate 75, and aspartate 147 each contribute to the Mg(2+) site.

It belongs to the RuvC family. In terms of assembly, homodimer which binds Holliday junction (HJ) DNA. The HJ becomes 2-fold symmetrical on binding to RuvC with unstacked arms; it has a different conformation from HJ DNA in complex with RuvA. In the full resolvosome a probable DNA-RuvA(4)-RuvB(12)-RuvC(2) complex forms which resolves the HJ. It depends on Mg(2+) as a cofactor.

It is found in the cytoplasm. It catalyses the reaction Endonucleolytic cleavage at a junction such as a reciprocal single-stranded crossover between two homologous DNA duplexes (Holliday junction).. Its function is as follows. The RuvA-RuvB-RuvC complex processes Holliday junction (HJ) DNA during genetic recombination and DNA repair. Endonuclease that resolves HJ intermediates. Cleaves cruciform DNA by making single-stranded nicks across the HJ at symmetrical positions within the homologous arms, yielding a 5'-phosphate and a 3'-hydroxyl group; requires a central core of homology in the junction. The consensus cleavage sequence is 5'-(A/T)TT(C/G)-3'. Cleavage occurs on the 3'-side of the TT dinucleotide at the point of strand exchange. HJ branch migration catalyzed by RuvA-RuvB allows RuvC to scan DNA until it finds its consensus sequence, where it cleaves and resolves the cruciform DNA. This chain is Crossover junction endodeoxyribonuclease RuvC, found in Caulobacter vibrioides (strain ATCC 19089 / CIP 103742 / CB 15) (Caulobacter crescentus).